We begin with the raw amino-acid sequence, 177 residues long: Large ribosomal subunit protein uL6 (177 aa).

It belongs to the universal ribosomal protein uL6 family. In terms of assembly, part of the 50S ribosomal subunit.

Its function is as follows. This protein binds to the 23S rRNA, and is important in its secondary structure. It is located near the subunit interface in the base of the L7/L12 stalk, and near the tRNA binding site of the peptidyltransferase center. The chain is Large ribosomal subunit protein uL6 from Actinobacillus succinogenes (strain ATCC 55618 / DSM 22257 / CCUG 43843 / 130Z).